The primary structure comprises 184 residues: Elongation factor P (184 aa).

Belongs to the elongation factor P family.

It is found in the cytoplasm. It participates in protein biosynthesis; polypeptide chain elongation. In terms of biological role, involved in peptide bond synthesis. Stimulates efficient translation and peptide-bond synthesis on native or reconstituted 70S ribosomes in vitro. Probably functions indirectly by altering the affinity of the ribosome for aminoacyl-tRNA, thus increasing their reactivity as acceptors for peptidyl transferase. The protein is Elongation factor P of Delftia acidovorans (strain DSM 14801 / SPH-1).